Reading from the N-terminus, the 149-residue chain is 3-dehydroquinate dehydratase (149 aa).

Residue tyrosine 24 is the Proton acceptor of the active site. The substrate site is built by asparagine 75, histidine 81, and aspartate 88. Residue histidine 101 is the Proton donor of the active site. Substrate-binding positions include 102-103 (LS) and arginine 112.

This sequence belongs to the type-II 3-dehydroquinase family. As to quaternary structure, homododecamer.

It carries out the reaction 3-dehydroquinate = 3-dehydroshikimate + H2O. It functions in the pathway metabolic intermediate biosynthesis; chorismate biosynthesis; chorismate from D-erythrose 4-phosphate and phosphoenolpyruvate: step 3/7. Functionally, catalyzes a trans-dehydration via an enolate intermediate. This is 3-dehydroquinate dehydratase from Bartonella tribocorum (strain CIP 105476 / IBS 506).